The sequence spans 337 residues: Diacylglycerol O-acyltransferase 2-like protein 6 (337 aa).

The next 2 membrane-spanning stretches (helical) occupy residues 22–42 (IPVY…FLLF) and 102–122 (YIIA…NFAT).

This sequence belongs to the diacylglycerol acyltransferase family. In terms of tissue distribution, expressed in all tissues tested except pancreas.

It localises to the endoplasmic reticulum membrane. The enzyme catalyses 1,2-di-(9Z-octadecenoyl)-sn-glycerol + (9Z)-octadecenoyl-CoA = 1,2,3-tri-(9Z-octadecenoyl)-glycerol + CoA. It carries out the reaction 1-O-(9Z-octadecenyl)-glycerol + (9Z)-octadecenoyl-CoA = 1-O-(9Z-octadecyl)-3-(9Z-octadecenoyl)-glycerol + CoA. It catalyses the reaction 1-(9Z-octadecenoyl)-glycerol + (9Z)-octadecenoyl-CoA = 1,2-di-(9Z-octadecenoyl)-glycerol + CoA. Functionally, diglyceride acyltransferase that uses fatty acyl-CoA as substrate. Particularly active with oleate as a substrate. Has no wax synthase activity to produce wax esters. Able to use 1-monoalkylglycerol (1-MAkG) as an acyl acceptor for the synthesis of monoalkyl-monoacylglycerol (MAMAG). This Homo sapiens (Human) protein is Diacylglycerol O-acyltransferase 2-like protein 6.